Here is a 396-residue protein sequence, read N- to C-terminus: Decapping nuclease RAI1 (396 aa).

107–109 is a substrate binding site; that stretch reads YRG. E179 provides a ligand contact to a divalent metal cation. Residue E228 coordinates substrate. A divalent metal cation contacts are provided by D230, E249, and L250. Positions 251 and 275 each coordinate substrate.

It belongs to the DXO/Dom3Z family. Interacts with RAT1; the interaction is direct, stabilizes RAT1 protein structure and stimulates its exoribonuclease activity. The interaction also stimulates RAI1 pyrophosphohydrolase activity, probably by recruiting it to mRNA substrates. The cofactor is a divalent metal cation.

The protein localises to the nucleus. The enzyme catalyses a 5'-end NAD(+)-phospho-ribonucleoside in mRNA + H2O = a 5'-end phospho-ribonucleoside in mRNA + NAD(+) + H(+). It carries out the reaction a 5'-end (N(7)-methyl 5'-triphosphoguanosine)-ribonucleoside-ribonucleotide in mRNA + H2O = a (N(7)-methyl 5'-triphosphoguanosine)-nucleoside + a 5'-end phospho-ribonucleoside in mRNA + H(+). The catalysed reaction is a 5'-end triphospho-ribonucleoside in mRNA + H2O = a 5'-end phospho-ribonucleoside in mRNA + diphosphate + H(+). In terms of biological role, decapping enzyme for NAD-capped RNAs: specifically hydrolyzes the nicotinamide adenine dinucleotide (NAD) cap from a subset of RNAs by removing the entire NAD moiety from the 5'-end of an NAD-capped RNA. The NAD-cap is present at the 5'-end of some RNAs and snoRNAs. In contrast to the canonical 5'-end N7 methylguanosine (m7G) cap, the NAD cap promotes mRNA decay. Also acts as a non-canonical decapping enzyme that removes the entire cap structure of m7G capped or incompletely capped RNAs. Has decapping activity toward incomplete 5'-end m7G cap mRNAs such as unmethylated 5'-end-capped RNA (cap0), while it has no activity toward 2'-O-ribose methylated m7G cap (cap1). Also possesses RNA 5'-pyrophosphohydrolase activity by hydrolyzing the 5'-end triphosphate to release pyrophosphates. Stimulates exoribonuclease activity of Rat1, allowing it to degrade RNAs with stable secondary structure more effectively. In Scheffersomyces stipitis (strain ATCC 58785 / CBS 6054 / NBRC 10063 / NRRL Y-11545) (Yeast), this protein is Decapping nuclease RAI1.